We begin with the raw amino-acid sequence, 204 residues long: Probable GTP-binding protein EngB (204 aa).

Residues 1 to 21 form a disordered region; the sequence is MKVSSAEFVTSGTRPAHYPPP. The EngB-type G domain maps to 22-194; sequence ELPEVAFAGR…WARIEVMLAA (173 aa). GTP-binding positions include 30–37, 57–61, 75–78, 142–145, and 173–175; these read GRSNVGKS, GRTQL, DLPG, TKCD, and FSA. 2 residues coordinate Mg(2+): Ser37 and Thr59.

The protein belongs to the TRAFAC class TrmE-Era-EngA-EngB-Septin-like GTPase superfamily. EngB GTPase family. The cofactor is Mg(2+).

Its function is as follows. Necessary for normal cell division and for the maintenance of normal septation. In Geobacter metallireducens (strain ATCC 53774 / DSM 7210 / GS-15), this protein is Probable GTP-binding protein EngB.